We begin with the raw amino-acid sequence, 68 residues long: Protein transport protein Sec61 subunit gamma (68 aa).

N-acetylmethionine is present on methionine 1. At 1–32 the chain is on the cytoplasmic side; that stretch reads MDQVMQFVEPSRQFVKDSIRLVKRCTKPDRKE. At serine 18 the chain carries Phosphoserine. Residues 33–61 traverse the membrane as a helical segment; the sequence is FQKIAMATAIGFAIMGFIGFFVKLIHIPI. Topologically, residues 62–68 are extracellular; the sequence is NNIIVGG.

This sequence belongs to the SecE/SEC61-gamma family. In terms of assembly, the SEC61 channel-forming translocon complex consists of channel-forming core components SEC61A1, SEC61B and SEC61G and different auxiliary components such as SEC62 and SEC63. The SEC61 channel associates with the multi-pass translocon (MPT) complex.

The protein localises to the endoplasmic reticulum membrane. Its function is as follows. Component of SEC61 channel-forming translocon complex that mediates transport of signal peptide-containing precursor polypeptides across the endoplasmic reticulum (ER). Forms a ribosome receptor and a gated pore in the ER membrane, both functions required for cotranslational translocation of nascent polypeptides. The SEC61 channel is also involved in ER membrane insertion of transmembrane proteins: it mediates membrane insertion of the first few transmembrane segments of proteins, while insertion of subsequent transmembrane regions of multi-pass membrane proteins is mediated by the multi-pass translocon (MPT) complex. The SEC61 channel cooperates with the translocating protein TRAM1 to import nascent proteins into the ER. This Bos taurus (Bovine) protein is Protein transport protein Sec61 subunit gamma (SEC61G).